Reading from the N-terminus, the 435-residue chain is Tol-Pal system protein TolB (435 aa).

The first 24 residues, 1–24 (MIPMPKMIRSLLLLFCLLPLGAQA), serve as a signal peptide directing secretion.

It belongs to the TolB family. As to quaternary structure, the Tol-Pal system is composed of five core proteins: the inner membrane proteins TolA, TolQ and TolR, the periplasmic protein TolB and the outer membrane protein Pal. They form a network linking the inner and outer membranes and the peptidoglycan layer.

The protein resides in the periplasm. Functionally, part of the Tol-Pal system, which plays a role in outer membrane invagination during cell division and is important for maintaining outer membrane integrity. This Thioalkalivibrio sulfidiphilus (strain HL-EbGR7) protein is Tol-Pal system protein TolB.